Here is an 871-residue protein sequence, read N- to C-terminus: Protein translocase subunit SecA (871 aa).

Residues glutamine 80, 98-102 (GEGKT), and aspartate 537 contribute to the ATP site.

Belongs to the SecA family. Monomer and homodimer. Part of the essential Sec protein translocation apparatus which comprises SecA, SecYEG and auxiliary proteins SecDF. Other proteins may also be involved. A single SecA monomer interacts with SecY in the channel.

The protein localises to the cell inner membrane. The protein resides in the cytoplasm. It catalyses the reaction ATP + H2O + cellular proteinSide 1 = ADP + phosphate + cellular proteinSide 2.. Its function is as follows. Part of the Sec protein translocase complex. Interacts with the SecYEG preprotein conducting channel. Has a central role in coupling the hydrolysis of ATP to the transfer of proteins into and across the cell membrane, serving as an ATP-driven molecular motor driving the stepwise translocation of polypeptide chains across the membrane. The polypeptide is Protein translocase subunit SecA (Thermotoga maritima (strain ATCC 43589 / DSM 3109 / JCM 10099 / NBRC 100826 / MSB8)).